The sequence spans 868 residues: Leucine--tRNA ligase (868 aa).

The short motif at 42 to 52 is the 'HIGH' region element; sequence PYPSGKLHMGH. The 'KMSKS' region motif lies at 627–631; it reads KMSKS. ATP is bound at residue lysine 630.

Belongs to the class-I aminoacyl-tRNA synthetase family.

It localises to the cytoplasm. The enzyme catalyses tRNA(Leu) + L-leucine + ATP = L-leucyl-tRNA(Leu) + AMP + diphosphate. This is Leucine--tRNA ligase from Pseudomonas syringae pv. syringae (strain B728a).